The following is a 109-amino-acid chain: RNA-binding protein Hfq (109 aa).

Residues 9–68 (DPFLNALRKEKVNVSVYLVNGIKLQGQVEAFDQFCIVLRNTVNQMVYKHAISTIVPAKSV) form the Sm domain. The disordered stretch occupies residues 77-109 (PYHQNSNDEQDENVDDIHSDDLEIQENEGNIHE).

This sequence belongs to the Hfq family. Homohexamer.

Functionally, RNA chaperone that binds small regulatory RNA (sRNAs) and mRNAs to facilitate mRNA translational regulation in response to envelope stress, environmental stress and changes in metabolite concentrations. Also binds with high specificity to tRNAs. This chain is RNA-binding protein Hfq, found in Francisella tularensis subsp. mediasiatica (strain FSC147).